The sequence spans 392 residues: Phosphoglycerate kinase (392 aa).

Residues 19–21 (DFN), R35, 58–61 (HMGR), R117, and R150 each bind substrate. ATP-binding positions include K201, E323, and 349-352 (GGDS).

The protein belongs to the phosphoglycerate kinase family. In terms of assembly, monomer.

Its subcellular location is the cytoplasm. It catalyses the reaction (2R)-3-phosphoglycerate + ATP = (2R)-3-phospho-glyceroyl phosphate + ADP. It functions in the pathway carbohydrate degradation; glycolysis; pyruvate from D-glyceraldehyde 3-phosphate: step 2/5. In Desulfotalea psychrophila (strain LSv54 / DSM 12343), this protein is Phosphoglycerate kinase.